The following is a 421-amino-acid chain: DUF724 domain-containing protein 8 (421 aa).

Composition is skewed to polar residues over residues 149 to 165 and 199 to 213; these read TQGSGDKTGDSVRNANE and PRNQNGSGNDSTLEN. Positions 149–229 are disordered; sequence TQGSGDKTGD…NRKRKREENL (81 aa). Residues 246–420 enclose the DUF724 domain; it reads VLPFEKKLRI…LEFLATASAP (175 aa). Residues 361-397 adopt a coiled-coil conformation; sequence EKVTAEKESVKAENKRKILELQRLNEEMDKEIAQSKS.

In terms of tissue distribution, expressed in leaves and flowers, and at lower levels in roots, stems and siliques.

It is found in the nucleus. Functionally, may be involved in the polar growth of plant cells via transportation of RNAs. The polypeptide is DUF724 domain-containing protein 8 (Arabidopsis thaliana (Mouse-ear cress)).